Here is a 583-residue protein sequence, read N- to C-terminus: Protein disulfide-isomerase-like protein of the testis (583 aa).

The signal sequence occupies residues 1 to 17 (MDLLWMPLLLVAARISA). Asn58, Asn128, Asn160, and Asn340 each carry an N-linked (GlcNAc...) asparagine glycan. The 64-residue stretch at 388–451 (LVKQLVGKNF…IAKIDITAND (64 aa)) folds into the Thioredoxin domain. Basic and acidic residues-rich tracts occupy residues 522–531 (EVPMMKKELP) and 540–559 (NVTK…KTSE). Residues 522-583 (EVPMMKKELP…KKKPKVKEEL (62 aa)) are disordered. Asn540 is a glycosylation site (N-linked (GlcNAc...) asparagine). Basic residues predominate over residues 573 to 583 (QKKKPKVKEEL). Positions 580–583 (KEEL) match the Prevents secretion from ER motif.

It belongs to the protein disulfide isomerase family. As to quaternary structure, homodimer. The homodimer is not disulfide-linked. Interacts with ERO1A and CLGN. Post-translationally, N-glycosylated.

It localises to the endoplasmic reticulum. Its function is as follows. Probable redox-inactive chaperone involved in spermatogenesis. This Macaca fascicularis (Crab-eating macaque) protein is Protein disulfide-isomerase-like protein of the testis (PDILT).